The primary structure comprises 153 residues: Superoxide dismutase [Cu-Zn] (153 aa).

Residues His-45 and His-47 each contribute to the Cu cation site. Phosphothreonine is present on Thr-53. A disulfide bridge connects residues Cys-56 and Cys-145. A Phosphoserine modification is found at Ser-59. Residue His-62 participates in Cu cation binding. Zn(2+) is bound by residues His-62, His-70, His-79, and Asp-82. His-119 serves as a coordination point for Cu cation.

It belongs to the Cu-Zn superoxide dismutase family. Homodimer. It depends on Cu cation as a cofactor. Zn(2+) serves as cofactor.

It localises to the cytoplasm. It catalyses the reaction 2 superoxide + 2 H(+) = H2O2 + O2. Its function is as follows. Destroys radicals which are normally produced within the cells and which are toxic to biological systems. In Drosophila melanogaster (Fruit fly), this protein is Superoxide dismutase [Cu-Zn].